The chain runs to 212 residues: Imidazole glycerol phosphate synthase subunit HisH 2 (212 aa).

The region spanning 4-211 (HLGLIDYGMG…LDWLQRGAPI (208 aa)) is the Glutamine amidotransferase type-1 domain. C82 (nucleophile) is an active-site residue. Catalysis depends on residues H186 and E188.

In terms of assembly, heterodimer of HisH and HisF.

Its subcellular location is the cytoplasm. The catalysed reaction is 5-[(5-phospho-1-deoxy-D-ribulos-1-ylimino)methylamino]-1-(5-phospho-beta-D-ribosyl)imidazole-4-carboxamide + L-glutamine = D-erythro-1-(imidazol-4-yl)glycerol 3-phosphate + 5-amino-1-(5-phospho-beta-D-ribosyl)imidazole-4-carboxamide + L-glutamate + H(+). It carries out the reaction L-glutamine + H2O = L-glutamate + NH4(+). It participates in amino-acid biosynthesis; L-histidine biosynthesis; L-histidine from 5-phospho-alpha-D-ribose 1-diphosphate: step 5/9. IGPS catalyzes the conversion of PRFAR and glutamine to IGP, AICAR and glutamate. The HisH subunit provides the glutamine amidotransferase activity that produces the ammonia necessary to HisF for the synthesis of IGP and AICAR. The chain is Imidazole glycerol phosphate synthase subunit HisH 2 (hisH2) from Parasynechococcus marenigrum (strain WH8102).